Reading from the N-terminus, the 114-residue chain is MAEKPKRPLSAYMLWLNSARESIKKENPDFKVTEIAKKGGELWRGMKDKSEWEAKAAKMKEEYEKAMKEFERNGGDKSSGASTKKRGKAAEKKKPAKKSKKKDSEDDEEEDESD.

Residues 5–71 (PKRPLSAYML…EYEKAMKEFE (67 aa)) constitute a DNA-binding region (HMG box). The segment at 69-114 (EFERNGGDKSSGASTKKRGKAAEKKKPAKKSKKKDSEDDEEEDESD) is disordered. A compositionally biased stretch (acidic residues) spans 105–114 (EDDEEEDESD).

It belongs to the HMGB family.

The protein resides in the nucleus. Its subcellular location is the chromosome. Found in condensed chromomeres. Binds preferentially to AT-rich DNA. The sequence is that of Mobility group protein 1A (HMG1A) from Chironomus tentans (Midge).